The sequence spans 134 residues: Methylglyoxal synthase (134 aa).

The MGS-like domain occupies 1–134 (MVNLNIALIA…GLLEWRNAVK (134 aa)). Substrate is bound by residues His-11, Lys-15, and 37–40 (TGAT). Catalysis depends on Asp-63, which acts as the Proton donor/acceptor. Substrate is bound at residue His-90.

It belongs to the methylglyoxal synthase family.

The enzyme catalyses dihydroxyacetone phosphate = methylglyoxal + phosphate. Functionally, catalyzes the formation of methylglyoxal from dihydroxyacetone phosphate. The chain is Methylglyoxal synthase from Thermoanaerobacterium thermosaccharolyticum (Clostridium thermosaccharolyticum).